We begin with the raw amino-acid sequence, 29 residues long: GLPVCGESCFGGSCYTPGCSCTWPICTRD.

A cross-link (cyclopeptide (Gly-Asp)) is located at residues 1-29; that stretch reads GLPVCGESCFGGSCYTPGCSCTWPICTRD. 3 disulfide bridges follow: C5-C19, C9-C21, and C14-C26.

Post-translationally, this is a cyclic peptide.

Probably participates in a plant defense mechanism. The protein is Kalata-B15 of Oldenlandia affinis.